The sequence spans 167 residues: Ribosome maturation factor RimM (167 aa).

One can recognise a PRC barrel domain in the interval 92–165 (EDTYYIADII…RITIDPIEGM (74 aa)).

This sequence belongs to the RimM family. In terms of assembly, binds ribosomal protein uS19.

The protein resides in the cytoplasm. Its function is as follows. An accessory protein needed during the final step in the assembly of 30S ribosomal subunit, possibly for assembly of the head region. Essential for efficient processing of 16S rRNA. May be needed both before and after RbfA during the maturation of 16S rRNA. It has affinity for free ribosomal 30S subunits but not for 70S ribosomes. The polypeptide is Ribosome maturation factor RimM (Alkaliphilus oremlandii (strain OhILAs) (Clostridium oremlandii (strain OhILAs))).